The sequence spans 620 residues: MALLQIAEPGLSPQPHQRRLAVGIDLGTTNSLVAAVRSGLSEPLADAEGQVILPSAVRYHADRVEVGQSAKIAASQDPFNTVLSVKRLMGRGLTDVKQLGEQLPYRFVGGESHMPFIDTVQGPKSPVEVSADILKVLRERAESTLGGELVGAVITVPAYFDDSQRQATKDAARLAGLNVLRLLNEPTAAAVAYGLDQKAEGVVAIYDLGGGTFDISILRLTGGVFEVLATGGDTALGGDDFDHAIANWIVTDAALSADIDPSAQRSLLQAACSAKEALTDAESVEVAYGDWRGTLTREALNALIEPMVARSLKACRRAVRDTGIELEEVEAVVMVGGSTRVPRVREAVAELFGRQPLTQIDPDQVVAIGAAIQADTLAGNKRDGGELLLLDVIPLSLGLETMGGLMEKVIPRNTTIPVARGQEFTTYKDGQTAMKIHVLQGERELISDCRSLARFELRGIPPMVAGAAKIRVTFQVDADGLLSVSAREMGSGIESSIQVKPSYGLTDDEVTRMLKDSFEYAGDDKVARVLREHQVDAERLLEAVQGALEADGERLLDEEERLVINLQMDELRELMQGTDGYAIEQQTKRLSQVTDAFAARRLDSTVKAALAGRNLNEIEE.

The protein belongs to the heat shock protein 70 family.

Functionally, chaperone involved in the maturation of iron-sulfur cluster-containing proteins. Has a low intrinsic ATPase activity which is markedly stimulated by HscB. The chain is Chaperone protein HscA homolog from Pseudomonas savastanoi pv. phaseolicola (strain 1448A / Race 6) (Pseudomonas syringae pv. phaseolicola (strain 1448A / Race 6)).